The sequence spans 284 residues: Expansin-A17 (284 aa).

An N-terminal signal peptide occupies residues 1–21 (MASSWNNPAIFLAAALAVATA). An Expansin-like EG45 domain is found at 71-185 (GGACGYVSND…RRVPCQRTGG (115 aa)). In terms of domain architecture, Expansin-like CBD spans 195–279 (YWLLLYVMNV…WWITGLCYQG (85 aa)).

The protein belongs to the expansin family. Expansin A subfamily. Expressed in roots.

Its subcellular location is the secreted. The protein resides in the cell wall. It is found in the membrane. May cause loosening and extension of plant cell walls by disrupting non-covalent bonding between cellulose microfibrils and matrix glucans. No enzymatic activity has been found. May be required for rapid internodal elongation in deepwater rice during submergence. In Oryza sativa subsp. japonica (Rice), this protein is Expansin-A17 (EXPA17).